Consider the following 394-residue polypeptide: MEFIIKSLLDTDLYKFTMMQAVLHQYPGAQVEYRFKCRTPGVDLARFINEISHEIDGLCGLCFSKEELDYLRGLRFMKPDFVDFLGLFHLDRKYLQLRASSQVPGEIELDIRGPWLHTILFEVPLLAIINEVWFRNTSVLNLDVGRDRLDAKVRLLKDESGYEECSIADYGTRRRYSRQWHAELLPLLAQGLGSNFVGTSNVYFAKQYGYTPLGTMAHEYLQAFQALGPRLRDSQVAGLEAWAREYRGDLGIALSDVVGLDAFLGDFDLYFCKLFDGMRHDSGDPFKWGERIIMHLESHRIDPRTKVLVFSDGLDMNKVMRLYQHFRGRCRLAFGVGTSLTNDLGPTPLQIVIKMVRCNGQPVAKLSDSPGKSMCDDPGYLHYLRQVFGVSADV.

The residue at position 218 (H218) is a Phosphohistidine; by autocatalysis.

Belongs to the NAPRTase family. Post-translationally, transiently phosphorylated on a His residue during the reaction cycle. Phosphorylation strongly increases the affinity for substrates and increases the rate of nicotinate D-ribonucleotide production. Dephosphorylation regenerates the low-affinity form of the enzyme, leading to product release.

The catalysed reaction is nicotinate + 5-phospho-alpha-D-ribose 1-diphosphate + ATP + H2O = nicotinate beta-D-ribonucleotide + ADP + phosphate + diphosphate. It participates in cofactor biosynthesis; NAD(+) biosynthesis; nicotinate D-ribonucleotide from nicotinate: step 1/1. Catalyzes the synthesis of beta-nicotinate D-ribonucleotide from nicotinate and 5-phospho-D-ribose 1-phosphate at the expense of ATP. This is Nicotinate phosphoribosyltransferase from Xylella fastidiosa (strain Temecula1 / ATCC 700964).